A 335-amino-acid polypeptide reads, in one-letter code: MRN complex-interacting protein (335 aa).

2 disordered regions span residues 75-102 and 118-194; these read EEAVNGSEEENAGPLQAEAGSQQAPSKP and QELD…ALST. S100 is subject to Phosphoserine. Residues 129–142 are compositionally biased toward polar residues; that stretch reads TQLSTSAERPSSPA. Residues 145 to 148 carry the Nuclear localization signal (NLS) motif; sequence RKRK. Positions 177 to 194 are enriched in polar residues; it reads STGLFGTEQQGTSPALST. The segment at 203–230 is necessary for the association with the MRN complex; it reads FPRWKLPSPVTQVNAPSSKWARFLLAPG. Residues 273-335 are disordered; sequence RPPQAIHTTT…TTGEDFDDDL (63 aa). Residues 286–297 are compositionally biased toward basic and acidic residues; it reads DRPDRKTREQPR.

Belongs to the MRNIP family. In terms of assembly, associates with the MRE11-RAD50-NBN (MRN) damage-sensing complex; this association is constitutive. Interacts with MRE11. Interacts with NBN. Interacts with RAD50. Post-translationally, phosphorylated; phosphorylation is constitutive and occurs in the absence of any DNA-damaging stimulus. Phosphorylation is necessary for its nuclear retention.

Its subcellular location is the nucleus. The protein localises to the nucleoplasm. Functionally, plays a role in the cellular response to DNA damage and the maintenance of genome stability through its association with the MRN damage-sensing complex. Promotes chromatin loading and activity of the MRN complex to facilitate subsequent ATM-mediated DNA damage response signaling and DNA repair. The chain is MRN complex-interacting protein from Mus musculus (Mouse).